Consider the following 185-residue polypeptide: Guanylate kinase (185 aa).

Positions 3–181 constitute a Guanylate kinase-like domain; sequence TRMIIVAAPS…SYGEFKKIVE (179 aa). Residue 10 to 17 coordinates ATP; that stretch reads APSGAGKS.

The protein belongs to the guanylate kinase family.

Its subcellular location is the cytoplasm. The catalysed reaction is GMP + ATP = GDP + ADP. Functionally, essential for recycling GMP and indirectly, cGMP. This chain is Guanylate kinase, found in Bdellovibrio bacteriovorus (strain ATCC 15356 / DSM 50701 / NCIMB 9529 / HD100).